The sequence spans 957 residues: Outer kinetochore KNL1 complex subunit knl-1 (957 aa).

Copy 1 of the repeat occupies 87–90; that stretch reads MDIT. The 8 X 4 AA repeats of M-[D/E]-[I/L/M]-[S/T] stretch occupies residues 87 to 393; that stretch reads MDITGLNSTP…NFDDVAMDIT (307 aa). The disordered stretch occupies residues 89–111; that stretch reads ITGLNSTPVTPKTQTPFNGSMDM. Polar residues predominate over residues 91-106; it reads GLNSTPVTPKTQTPFN. 7 consecutive repeat copies span residues 109–112, 206–209, 251–254, 282–285, 326–329, 367–370, and 390–393. Positions 476-504 are disordered; the sequence is SLQQSSMRMSTTITEDVTASKNPESSTIS. The stretch at 830 to 950 forms a coiled coil; the sequence is KFAKESNVEI…RKKKEEMVER (121 aa).

In terms of assembly, component of the KNL1 complex composed of knl-1 and kbp-5. Part of the ten-subunit outer kinetochore KMN network that includes the KNL1, MIS12 and NDC80 complexes. Interacts with the protein phosphatase 1 (PP1) catalytic subunit gsp-1; the interaction is direct. Interacts with the protein phosphatase 1 (PP1) catalytic subunit gsp-2; the interaction is direct. Interacts with the MIS12 complex subunits kbp-1, kbp-2 and mis-12. Interacts with the NDC80 complex components ndc-80 and him-10. Interacts with knl-3. Interacts with kbp-3. Interacts with kbp-4. Interacts with kbp-5.

It is found in the cytoplasm. The protein resides in the cell cortex. It localises to the chromosome. Its subcellular location is the centromere. The protein localises to the kinetochore. Its function is as follows. Acts as a component of the outer kinetochore KNL1 complex that serves as a docking point for spindle assembly checkpoint components and mediates microtubule-kinetochore interactions. Kinetochores, consisting of a centromere-associated inner segment and a microtubule-contacting outer segment, play a crucial role in chromosome segregation by mediating the physical connection between centromeric DNA and spindle microtubules. The outer kinetochore is made up of the ten-subunit KMN network, comprising the MIS12, NDC80 and KNL1 complexes, and auxiliary microtubule-associated components; together they connect the outer kinetochore with the inner kinetochore, bind microtubules, and mediate interactions with mitotic checkpoint proteins that delay anaphase until chromosomes are bioriented on the spindle. Binds the protein phosphatase 1 catalytic subunits gsp-1 and gsp-2, which has a role in delaying formation of load-bearing kinetochore-microtubule attachments. Required for the recruitment of spindle-assembly checkpoint components bub-1 and mdf-1/2 to unattached kinetochores. Binds microtubules which plays a role in silencing of the spindle assembly checkpoint, but not the formation of load-bearing microtubule-kinetochore attachments. Has a role in the correct localization of the spindly-like protein spdl-1 and the RZZ complex that is composed of rod-1, czw-1 and zwl-1 to kinetochores. This is Outer kinetochore KNL1 complex subunit knl-1 from Caenorhabditis briggsae.